The sequence spans 232 residues: MSVVTMKQLLEAGVHFGHQTRRWNPKMKRYIFTERNGIYIVDLQKTVKKLDEAYEFVKELAANGEKIMFVGTKKQAQDAVKNEAERCEMFYVNQRWLGGMLTNFQTISKRLNRFYELEQMEEDGTFEVLPKKEVQSLRREHAKLDKFLGGLRGMEDLPGALFVIDPKKEKIAVAEARKLGIPIVSIVDTNCDPDEVDYVIPGNDDAIRAVKLITEKIADSVLEGKQGVQLAE.

This sequence belongs to the universal ribosomal protein uS2 family.

In Natranaerobius thermophilus (strain ATCC BAA-1301 / DSM 18059 / JW/NM-WN-LF), this protein is Small ribosomal subunit protein uS2.